The following is a 666-amino-acid chain: Spartin (666 aa).

Position 1 is an N-acetylmethionine (Met-1). The MIT domain occupies 16–94 (IREAYKKAFL…LQNVRTRLEI (79 aa)). Residues 124–156 (EKLPEPQSFSSAPQHAEVNGNTSTPSAGAVAAP) are disordered. Residues 146–156 (STPSAGAVAAP) are compositionally biased toward low complexity. Positions 190–380 (DSGEFSSVGE…QLDQGNKDVR (191 aa)) are ubiquitin-binding region (UBR) domain. The short motif at 193–200 (EFSSVGEE) is the LC3-interacting region (LIR); mediates interaction with MAP1LC3A AND MAP1LC3C element. The disordered stretch occupies residues 344–398 (EENEFQIPGRTRPSSDQLKEASGTDVKQLDQGNKDVRHKGKRGKRAKDTSSEEVN). A Glycyl lysine isopeptide (Lys-Gly) (interchain with G-Cter in ubiquitin) cross-link involves residue Lys-362. Residues 379 to 388 (VRHKGKRGKR) show a composition bias toward basic residues. The region spanning 427 to 611 (ILSGASWVSW…YNINNIGIKA (185 aa)) is the Senescence domain. Residues 431–503 (ASWVSWGLVK…LVDGVCTVAN (73 aa)) are required for localization to lipid droplets. Ser-470 bears the Phosphoserine mark. The disordered stretch occupies residues 636-666 (RENQEGAANVNVRGEKDEQTKEVKEAKKKDK). Basic and acidic residues predominate over residues 648-666 (RGEKDEQTKEVKEAKKKDK).

As to quaternary structure, interacts with ITCH and WWP1. Interacts (via MIT domain) with IST1; leading to the recruitment of SPART to midbodies. Interacts with MAP1LC3A and MAP1LC3C. In terms of processing, ubiquitinated; ubiquitination does not require ITCH and WWP1. In terms of tissue distribution, ubiquitously expressed, with highest levels of expression detected in adipose tissue.

Its subcellular location is the cytoplasm. The protein localises to the midbody. The protein resides in the lipid droplet. Functionally, lipophagy receptor that plays an important role in lipid droplet (LD) turnover in motor neurons. Localizes to LDs and interacts with components of the autophagy machinery, such as MAP1LC3A/C proteins to deliver LDs to autophagosomes for degradation via lipophagy. Lipid transfer protein required for lipid droplet degradation, including by lipophagy. Can bind and transfer all lipid species found in lipid droplets, from phospholipids to triglycerides and sterol esters but the direction of lipid transfer by spartin and its cargos are unknown. May be implicated in endosomal trafficking, or microtubule dynamics, or both. Participates in cytokinesis. This is Spartin from Homo sapiens (Human).